We begin with the raw amino-acid sequence, 70 residues long: Small ribosomal subunit protein bS21 (70 aa).

This sequence belongs to the bacterial ribosomal protein bS21 family.

This chain is Small ribosomal subunit protein bS21, found in Nitrosomonas eutropha (strain DSM 101675 / C91 / Nm57).